The chain runs to 474 residues: tRNA-2-methylthio-N(6)-dimethylallyladenosine synthase (474 aa).

Residues 3–120 form the MTTase N-terminal domain; it reads KKLHIKTWGC…LPEMINHVQG (118 aa). Residues Cys12, Cys49, Cys83, Cys157, Cys161, and Cys164 each contribute to the [4Fe-4S] cluster site. Residues 143 to 375 enclose the Radical SAM core domain; that stretch reads RAEGPTAFVS…QQRITQQAME (233 aa). Residues 378–441 form the TRAM domain; that stretch reads REMVGTVQRI…ASSLRGILLR (64 aa).

It belongs to the methylthiotransferase family. MiaB subfamily. As to quaternary structure, monomer. [4Fe-4S] cluster is required as a cofactor.

The protein resides in the cytoplasm. It catalyses the reaction N(6)-dimethylallyladenosine(37) in tRNA + (sulfur carrier)-SH + AH2 + 2 S-adenosyl-L-methionine = 2-methylsulfanyl-N(6)-dimethylallyladenosine(37) in tRNA + (sulfur carrier)-H + 5'-deoxyadenosine + L-methionine + A + S-adenosyl-L-homocysteine + 2 H(+). Functionally, catalyzes the methylthiolation of N6-(dimethylallyl)adenosine (i(6)A), leading to the formation of 2-methylthio-N6-(dimethylallyl)adenosine (ms(2)i(6)A) at position 37 in tRNAs that read codons beginning with uridine. This is tRNA-2-methylthio-N(6)-dimethylallyladenosine synthase from Yersinia enterocolitica serotype O:8 / biotype 1B (strain NCTC 13174 / 8081).